The sequence spans 265 residues: Small ribosomal subunit protein uS5 (265 aa).

Over residues 1-15 (MADTQPAQEAPAADA) the composition is skewed to low complexity. The disordered stretch occupies residues 1 to 44 (MADTQPAQEAPAADAPRAERNFGRGRGGRGGRGRGRGGPGEEKE). Positions 26 to 35 (RGGRGGRGRG) are enriched in basic residues. The S5 DRBM domain maps to 88–151 (LHDEMMKIYP…IAAKLNIVPV (64 aa)). Positions 245 to 265 (TEPSRDPTDEHGELLAEMTTA) are disordered. Positions 246–258 (EPSRDPTDEHGEL) are enriched in basic and acidic residues.

It belongs to the universal ribosomal protein uS5 family.

In terms of biological role, component of the ribosome, a large ribonucleoprotein complex responsible for the synthesis of proteins in the cell. The small ribosomal subunit (SSU) binds messenger RNAs (mRNAs) and translates the encoded message by selecting cognate aminoacyl-transfer RNA (tRNA) molecules. The large subunit (LSU) contains the ribosomal catalytic site termed the peptidyl transferase center (PTC), which catalyzes the formation of peptide bonds, thereby polymerizing the amino acids delivered by tRNAs into a polypeptide chain. The nascent polypeptides leave the ribosome through a tunnel in the LSU and interact with protein factors that function in enzymatic processing, targeting, and the membrane insertion of nascent chains at the exit of the ribosomal tunnel. Plays a role in the assembly and function of the 40S ribosomal subunit. Mutations in this protein affects the control of translational fidelity. Involved in nucleolar processing of pre-18S ribosomal RNA and ribosome assembly. In Leishmania amazonensis, this protein is Small ribosomal subunit protein uS5.